The sequence spans 270 residues: 4-hydroxy-tetrahydrodipicolinate reductase (270 aa).

Residue 7-12 coordinates NAD(+); it reads GANGRM. Arg-34 contacts NADP(+). Residues 97 to 99 and 121 to 124 contribute to the NAD(+) site; these read GTT and SGNM. The Proton donor/acceptor role is filled by His-155. A (S)-2,3,4,5-tetrahydrodipicolinate-binding site is contributed by His-156. The Proton donor role is filled by Lys-159. 165–166 serves as a coordination point for (S)-2,3,4,5-tetrahydrodipicolinate; sequence GT.

It belongs to the DapB family.

The protein resides in the cytoplasm. The catalysed reaction is (S)-2,3,4,5-tetrahydrodipicolinate + NAD(+) + H2O = (2S,4S)-4-hydroxy-2,3,4,5-tetrahydrodipicolinate + NADH + H(+). It catalyses the reaction (S)-2,3,4,5-tetrahydrodipicolinate + NADP(+) + H2O = (2S,4S)-4-hydroxy-2,3,4,5-tetrahydrodipicolinate + NADPH + H(+). It participates in amino-acid biosynthesis; L-lysine biosynthesis via DAP pathway; (S)-tetrahydrodipicolinate from L-aspartate: step 4/4. Catalyzes the conversion of 4-hydroxy-tetrahydrodipicolinate (HTPA) to tetrahydrodipicolinate. This chain is 4-hydroxy-tetrahydrodipicolinate reductase, found in Bartonella tribocorum (strain CIP 105476 / IBS 506).